The following is a 541-amino-acid chain: GMP synthase [glutamine-hydrolyzing] (541 aa).

Positions 17–212 (TILVLDFGSQ…AVDICQSTTD (196 aa)) constitute a Glutamine amidotransferase type-1 domain. The Nucleophile role is filled by Cys-93. Active-site residues include His-186 and Glu-188. A GMPS ATP-PPase domain is found at 213–416 (WTMGKFVDQE…LGIPEDLVWR (204 aa)). ATP is bound at residue 241–247 (SGGVDST). The XMP site is built by Arg-315, Asp-478, Lys-533, and Glu-539.

Homodimer. Requires Mg(2+) as cofactor.

The protein resides in the cytoplasm. The protein localises to the cytosol. It carries out the reaction XMP + L-glutamine + ATP + H2O = GMP + L-glutamate + AMP + diphosphate + 2 H(+). Its pathway is purine metabolism; GMP biosynthesis; GMP from XMP (L-Gln route): step 1/1. Functionally, catalyzes the conversion of xanthine monophosphate (XMP) to GMP in the presence of glutamine and ATP through an adenyl-XMP intermediate. In Phaeosphaeria nodorum (strain SN15 / ATCC MYA-4574 / FGSC 10173) (Glume blotch fungus), this protein is GMP synthase [glutamine-hydrolyzing] (GUA1).